We begin with the raw amino-acid sequence, 158 residues long: Lectin-like protein EP153R (158 aa).

Topologically, residues 1 to 26 (MFLNKKYPSLIEKKMDDLMTLKFCYL) are cytoplasmic. A helical transmembrane segment spans residues 27–47 (IITFLIITNIFSLAINIWGGG). The Extracellular portion of the chain corresponds to 48–158 (DMIDRQSCEN…YTETFFICSN (111 aa)). A disulfide bridge connects residues Cys-61 and Cys-72. The tract at residues 61–157 (CPKDWVGYNN…KYTETFFICS (97 aa)) is lectin-like. Residues Asn-81, Asn-94, Asn-100, Asn-106, Asn-112, Asn-119, and Asn-139 are each glycosylated (N-linked (GlcNAc...) asparagine; by host).

It belongs to the asfivirus lectin-like protein family. In terms of assembly, homodimer.

The protein resides in the host endoplasmic reticulum membrane. Functionally, down-regulates MHC-I expression by impairing the appropriate configuration or presentation into the plasma membrane of the latter. Participates in viral hemadsorption, which may help viral spread. Reduces the transactivating activity of host TP53, thus inhibiting apoptosis. Non-essential for virus growth in swine macrophage cell cultures. The sequence is that of Lectin-like protein EP153R from African swine fever virus (isolate Pig/Kenya/KEN-50/1950) (ASFV).